The following is a 212-amino-acid chain: Protein DEPP1 (212 aa).

3 disordered regions span residues E20–D39, Q49–A79, and Q113–R176. Residues Q113 to R124 show a composition bias toward basic and acidic residues.

As to expression, expressed in various tissues, including pancreas, placenta, ovary, testis and kidney.

The protein resides in the cytoplasm. It localises to the peroxisome. Its subcellular location is the mitochondrion. Its function is as follows. Acts as a critical modulator of FOXO3-induced autophagy via increased cellular ROS. The polypeptide is Protein DEPP1 (Homo sapiens (Human)).